Here is a 230-residue protein sequence, read N- to C-terminus: Putative 14-3-3-like protein GF14-H (230 aa).

This sequence belongs to the 14-3-3 family.

Is associated with a DNA binding complex that binds to the G box, a well-characterized cis-acting DNA regulatory element found in plant genes. This chain is Putative 14-3-3-like protein GF14-H (GF14H), found in Oryza sativa subsp. japonica (Rice).